The primary structure comprises 1444 residues: MYHNFDQLASCQESLFYSFSFLDPVDDAHTGHHIYACTSFGPDWGNLPANTTNLLLQSSDAPEPVNGTYQIGYWPAATGSSVLSSLVTLTNQLRQYLVRGLGSIDRPTILFARYGSTSVGLYIGQALDNRGIGENVLSSLSDSIASANASLAASVAMQFCEPGQTSHHVFGLIATGNGTFDSVQAALSSWSKAKCLTFPVVQNITGTLSLVKPLFNASYYATTVHPTRPPVSHATSTSSNATSVRGRALAPRTTCSTVQVVSGNCYDSLASECGITLAKFLQYNKVTDDDCSTLVIGEHFCCSAGQLPDFSPKPQSDGTCTTYTIKANDNCETIAASYSLTVDELENYNNDTWAWEGCNPLYVNNIICLSEGNAPMPASLANAECGPQVPGTLTPARGTNISTLNECPLNACCDVWGQCGTTSDFCINTGTGAPGTAKNGTNGCISNCGTAIVQSDKPATYRKVGFYEGFNLQRPCLYQDVSQIDLSAYTHIYFAFGALSSSYEVQIPNGTATGTTYEFDLFKQIVGTTRILSIGGWAFSTDPSTYMIFRDGVTSANRLTMATNIADFIKDHDLDGVNIDWEYPGASDIPGIPAASTDDGTNYLAFLAVLKNLLPDKEITIAAPASYWYLKGFPIKDMAELVDYVIYMTYDLHGQWDSHNQWSQEGCPTGACLRSDVNITETEGALSMITKAGVPSNQVVVGVTSYGRSFAMAEAGCYGPDCTYLGSADDSQATPGKCTQSAGYIANAEILAILANSSRVNENYIDIDSNTNILVYDDTQWVGWMSEGIKNSRKSVYQGLSMGGWTDWATDLQKFNDAPFTSTSWTKFTSDVILDVDPYVEGNRTGNWTSLTCSDAAVQDALYMPCSQRWSELDASNAWSDAINVWTTIDEPKLGNTEPGFTLSIMNTFHAGESMNCGSIAPNGACSTTETCAWFEGFGDSGESGPAAMLIYNSFTVINELTDKLVDQAYSQLWYAINGIAATYIDNQLSDFEDTFAPVPPAKSDEWLDILIDLLGLGLTAVAAPFFDGVFGALPALEALGEAGAQVAQDVTYSAIAYGVSIATSTLPSAAPGDWTAESQDSFSATMGSVLYGWSNATANQLYTLFNGSETSITLLTTLISDGKLIEGSGGAPSVGYQVSDSTSSDVEAFIGKAFFGYSIPTLWTISGSAAFVIDSGYPCSAQNPLTDYMTASTQESTYACYNDNLYYLVYPDGTEDGCSDQHEEKCVKKYFTAPPGLDTLSSTTWGGITLSELIEGSVNTYIANGNANGGPVADPMDALTLKDLSNQNITTPGYIRLPVCTAQVAWASWTNPAQSNSSASGYPCNPLQGVTKCSGYTYEDETTSASPSVSDCKTLMKNIAGTSGEWTTGIDGQRAIAKYGTCKFGVQNVGVTGDVTYNTGSQDIVNIVTEAISKYEWEGHVGAKGYMKCSGDAGSQKVEWGLY.

2 LysM domains span residues Ser-256 to Cys-302 and Thr-321 to Leu-369. The Chitin-binding type-1 domain maps to Asn-382–Thr-450. Disulfide bonds link Cys-385-Cys-413, Cys-407-Cys-419, Cys-412-Cys-426, and Cys-444-Cys-448. In terms of domain architecture, GH18 spans Tyr-461–Asp-831. Glu-582 (proton donor) is an active-site residue. Residues Tyr-583 and Trp-808 each contribute to the chitin site.

This sequence belongs to the glycosyl hydrolase 18 family. Chitinase class V subfamily.

The enzyme catalyses Random endo-hydrolysis of N-acetyl-beta-D-glucosaminide (1-&gt;4)-beta-linkages in chitin and chitodextrins.. Its function is as follows. Probable chitinase involved in the degradation of chitin, a component of the cell walls of fungi and exoskeletal elements of some animals (including worms and arthropods). Might be involved in manipulation of host defenses for successful infection. This is Probable chitinase LysM18 from Penicillium expansum (Blue mold rot fungus).